The sequence spans 513 residues: Probable WRKY transcription factor 3 (513 aa).

Over residues 1 to 11 (MAEKEEKEPSK) the composition is skewed to basic and acidic residues. 3 disordered regions span residues 1 to 26 (MAEK…ISLP), 175 to 281 (NVHM…PACP), and 297 to 394 (IIYK…VASS). A compositionally biased stretch (low complexity) spans 179–201 (QQSQQSEYPSSTQQQQQQQQQAS). A compositionally biased stretch (polar residues) spans 202–228 (LTEIPSFSSAPRSQIRASVQETSQGQR). Residues 229 to 240 (ETSEISVFEHRS) are compositionally biased toward basic and acidic residues. Residues 244 to 308 (NADKPADDGY…YKGQHNHELP (65 aa)) constitute a DNA-binding region (WRKY 1). 2 stretches are compositionally biased toward polar residues: residues 311–335 (RGNN…SSLN) and 343–355 (TSQV…MSEA). Basic and acidic residues predominate over residues 368-387 (VGERHEDEPDPKRRNTEVRV). Residues 409-474 (SEVDLLDDGY…YEGKHNHDVP (66 aa)) constitute a DNA-binding region (WRKY 2).

In terms of tissue distribution, in young, mature and senescent leaves.

It localises to the nucleus. Transcription factor. Interacts specifically with the W box (5'-(T)TGAC[CT]-3'), a frequently occurring elicitor-responsive cis-acting element. The sequence is that of Probable WRKY transcription factor 3 (WRKY3) from Arabidopsis thaliana (Mouse-ear cress).